The following is a 158-amino-acid chain: Cyclic pyranopterin monophosphate synthase (158 aa).

Residues 75–77 (LCH) and 113–114 (ME) each bind substrate. Residue Asp-128 is part of the active site.

Belongs to the MoaC family. Homohexamer; trimer of dimers.

It catalyses the reaction (8S)-3',8-cyclo-7,8-dihydroguanosine 5'-triphosphate = cyclic pyranopterin phosphate + diphosphate. It participates in cofactor biosynthesis; molybdopterin biosynthesis. Catalyzes the conversion of (8S)-3',8-cyclo-7,8-dihydroguanosine 5'-triphosphate to cyclic pyranopterin monophosphate (cPMP). This Mannheimia succiniciproducens (strain KCTC 0769BP / MBEL55E) protein is Cyclic pyranopterin monophosphate synthase.